The chain runs to 672 residues: Nuclear hormone receptor family member nhr-5 (672 aa).

Residues 1-19 are compositionally biased toward low complexity; the sequence is MSSGGNSSNVNRNSGSSNV. Positions 1–38 are disordered; sequence MSSGGNSSNVNRNSGSSNVITLNDSDEETEDSNLGSSS. A DNA-binding region (nuclear receptor) is located at residues 40-115; that stretch reads TNLCKVCGAE…EGMNPAYVRP (76 aa). NR C4-type zinc fingers lie at residues 43-63 and 79-98; these read CKVC…CVGC and CAAN…CRSC. The 270-residue stretch at 155 to 424 folds into the NR LBD domain; that stretch reads EMRTILMTLL…PLLTDLFGCF (270 aa). The interval 550-577 is disordered; that stretch reads NIQGPSHLPQCGSTVTQRPTVPSSTTSS. Residues 562–577 show a composition bias toward low complexity; the sequence is STVTQRPTVPSSTTSS.

Belongs to the nuclear hormone receptor family.

Its subcellular location is the nucleus. Orphan nuclear receptor. The protein is Nuclear hormone receptor family member nhr-5 (nhr-5) of Caenorhabditis elegans.